A 396-amino-acid chain; its full sequence is Phosphoglycerate kinase (396 aa).

Substrate is bound by residues 21 to 23 (DFN), Arg36, 59 to 62 (HLGK), Arg119, and Arg156. ATP is bound by residues Lys206, Glu325, and 352–355 (GGDS).

It belongs to the phosphoglycerate kinase family. As to quaternary structure, monomer.

Its subcellular location is the cytoplasm. The catalysed reaction is (2R)-3-phosphoglycerate + ATP = (2R)-3-phospho-glyceroyl phosphate + ADP. It participates in carbohydrate degradation; glycolysis; pyruvate from D-glyceraldehyde 3-phosphate: step 2/5. In Macrococcus caseolyticus (strain JCSC5402) (Macrococcoides caseolyticum), this protein is Phosphoglycerate kinase.